The primary structure comprises 231 residues: MKKRTFAVDIDGTITENGGGRIHLDALESLRRLVNMGHDVIFVTGRSSVEGFLLSVFGGTTKVSVGENGGCITLDSNDHILLGNLEECKNALNILKNNMENVEEKYVFPRMTEVVLQRTFDLDQARKILSENNIDVVLSDSQYAYHINSPGIDKGTGFTEIMKKFSISRDDVIAIGDSATDVPLFKVAKTSVALGNASDDVKSEATMTVSAHAGDGVLEALDKLAPILSEI.

D9 acts as the Nucleophile in catalysis. 2 residues coordinate Mg(2+): D9 and D11. A substrate-binding site is contributed by K154. Mg(2+) contacts are provided by D177 and D181.

Belongs to the archaeal SPP-like hydrolase family. It depends on Mg(2+) as a cofactor.

It carries out the reaction 2-phosphoglycolate + H2O = glycolate + phosphate. In terms of biological role, catalyzes the dephosphorylation of 2-phosphoglycolate. The chain is Phosphoglycolate phosphatase from Nitrosopumilus maritimus (strain SCM1).